We begin with the raw amino-acid sequence, 586 residues long: Old nuclease (586 aa).

The segment at 1 to 163 (MTVRLASVSI…VEDSTKCKNT (163 aa)) is ATPase domain N-terminus. 34–38 (NAGKS) is a binding site for ATP. The dimerization domain stretch occupies residues 164 to 270 (TTIGKILSAI…SRFGHGTQRS (107 aa)). The ATPase domain C-terminus stretch occupies residues 271–390 (IQMALIQYLA…TLSNSSYLLF (120 aa)). The segment at 393 to 586 (EVLLVEGKTE…DEMEDFIKWI (194 aa)) is toprim domain. The a divalent metal cation site is built by Glu398, Glu402, Asp453, Asp455, Asp541, and Glu543. The Stabilizes transition state or protonates leaving group role is filled by Arg570.

It belongs to the class 1 OLD nuclease family. Requires Mg(2+) as cofactor.

It carries out the reaction Exonucleolytic cleavage in the 5'- to 3'-direction to yield nucleoside 5'-phosphates.. Its function is as follows. An exonuclease that acts preferentially on linear dsDNA, processively degrading it from 5'-3', releasing 5'-phosphomononucleotides. Initiates on 5'-phosphate and 5'-hydroxyl ends. Also acts on linear ssDNA, nicked DNA and RNA. ATP enhances but is not necessary for exonuclease activity; has ATPase activity that is not stimulated by DNA. The old protein kills E.coli recB and recC mutants and interferes with phage lambda growth. Both the exonuclease and ATPase activities are required in vivo. Probably interferes with lambda phage by degrading its linear DNA. Isolated as a mutant able to lysogenize E.coli strain C cells normally not susceptible to lysis by phage P2. In Enterobacteriaceae (Bacteriophage P2), this protein is Old nuclease.